A 224-amino-acid chain; its full sequence is MDILLVEDDMTLFKELSEELEQWDFNVNGIDDFNDVMTKFESVNPAIVIMDVKLPKYDGFYWTRKIREVSNTPILFLSSRDNPMDQVMSMELGADDYVQKPFNTNVLIAKLQAIYRRVYQFSLDEKRVLSWQDAILDLSKDSINKEDHQIYLSKTEMIILEMLVKKQNQIVTRDTLITALWDDEAFVSDNTLTVNVNRLRKKLADIDMNDAIETKIGKGYMAHG.

The Response regulatory domain occupies 2–115 (DILLVEDDMT…VLIAKLQAIY (114 aa)). Asp51 carries the post-translational modification 4-aspartylphosphate. Residues 126–224 (KRVLSWQDAI…KIGKGYMAHG (99 aa)) constitute a DNA-binding region (ompR/PhoB-type).

Post-translationally, phosphorylated by GraS.

Its subcellular location is the cytoplasm. Its function is as follows. Member of the two-component regulatory system GraR/GraS involved in resistance against cationic antimicrobial peptides (CAMPs). The protein is Response regulator protein GraR (graR) of Staphylococcus saprophyticus subsp. saprophyticus (strain ATCC 15305 / DSM 20229 / NCIMB 8711 / NCTC 7292 / S-41).